A 347-amino-acid chain; its full sequence is Ribosomal RNA large subunit methyltransferase M (347 aa).

S-adenosyl-L-methionine contacts are provided by residues S184, 217 to 220 (APGG), D236, D256, and D272. K301 acts as the Proton acceptor in catalysis.

It belongs to the class I-like SAM-binding methyltransferase superfamily. RNA methyltransferase RlmE family. RlmM subfamily. Monomer.

The protein resides in the cytoplasm. It catalyses the reaction cytidine(2498) in 23S rRNA + S-adenosyl-L-methionine = 2'-O-methylcytidine(2498) in 23S rRNA + S-adenosyl-L-homocysteine + H(+). Catalyzes the 2'-O-methylation at nucleotide C2498 in 23S rRNA. The sequence is that of Ribosomal RNA large subunit methyltransferase M from Xanthomonas oryzae pv. oryzae (strain PXO99A).